A 564-amino-acid polypeptide reads, in one-letter code: Dihydroxy-acid dehydratase (564 aa).

D80 serves as a coordination point for Mg(2+). C121 provides a ligand contact to [2Fe-2S] cluster. The Mg(2+) site is built by D122 and K123. K123 carries the post-translational modification N6-carboxylysine. Position 194 (C194) interacts with [2Fe-2S] cluster. E447 contributes to the Mg(2+) binding site. S473 functions as the Proton acceptor in the catalytic mechanism.

It belongs to the IlvD/Edd family. Homodimer. [2Fe-2S] cluster is required as a cofactor. Mg(2+) serves as cofactor.

The catalysed reaction is (2R)-2,3-dihydroxy-3-methylbutanoate = 3-methyl-2-oxobutanoate + H2O. It carries out the reaction (2R,3R)-2,3-dihydroxy-3-methylpentanoate = (S)-3-methyl-2-oxopentanoate + H2O. It functions in the pathway amino-acid biosynthesis; L-isoleucine biosynthesis; L-isoleucine from 2-oxobutanoate: step 3/4. It participates in amino-acid biosynthesis; L-valine biosynthesis; L-valine from pyruvate: step 3/4. Functionally, functions in the biosynthesis of branched-chain amino acids. Catalyzes the dehydration of (2R,3R)-2,3-dihydroxy-3-methylpentanoate (2,3-dihydroxy-3-methylvalerate) into 2-oxo-3-methylpentanoate (2-oxo-3-methylvalerate) and of (2R)-2,3-dihydroxy-3-methylbutanoate (2,3-dihydroxyisovalerate) into 2-oxo-3-methylbutanoate (2-oxoisovalerate), the penultimate precursor to L-isoleucine and L-valine, respectively. The protein is Dihydroxy-acid dehydratase of Listeria welshimeri serovar 6b (strain ATCC 35897 / DSM 20650 / CCUG 15529 / CIP 8149 / NCTC 11857 / SLCC 5334 / V8).